We begin with the raw amino-acid sequence, 221 residues long: Eukaryotic translation initiation factor 3 subunit K (221 aa).

One can recognise a PCI domain in the interval 46 to 207 (YDLEANLACL…NIKTKHITEK (162 aa)).

Belongs to the eIF-3 subunit K family. As to quaternary structure, component of the eukaryotic translation initiation factor 3 (eIF-3) complex.

Its subcellular location is the cytoplasm. Component of the eukaryotic translation initiation factor 3 (eIF-3) complex, which is involved in protein synthesis of a specialized repertoire of mRNAs and, together with other initiation factors, stimulates binding of mRNA and methionyl-tRNAi to the 40S ribosome. The eIF-3 complex specifically targets and initiates translation of a subset of mRNAs involved in cell proliferation. The protein is Eukaryotic translation initiation factor 3 subunit K of Culex quinquefasciatus (Southern house mosquito).